A 292-amino-acid chain; its full sequence is uncharacterized protein (292 aa).

This is an uncharacterized protein from Haemophilus influenzae (strain ATCC 51907 / DSM 11121 / KW20 / Rd).